A 622-amino-acid polypeptide reads, in one-letter code: Probable ATP-citrate synthase (622 aa).

ATP-binding positions include 228–248 (ALRY…ELGG) and 279–305 (FPTE…KNKA). E245 serves as a coordination point for Mg(2+). H287 serves as the catalytic Tele-phosphohistidine intermediate. A CoA-binding site is contributed by 306 to 316 (LREAGAVVPTS).

It in the N-terminal section; belongs to the succinate/malate CoA ligase beta subunit family. In the C-terminal section; belongs to the succinate/malate CoA ligase alpha subunit family. As to quaternary structure, homotetramer.

It is found in the cytoplasm. It catalyses the reaction oxaloacetate + acetyl-CoA + ADP + phosphate = citrate + ATP + CoA. Its function is as follows. Catalyzes the cleavage of citrate into oxaloacetate and acetyl-CoA, the latter serving as common substrate in multiple biochemical reactions in protein, carbohydrate and lipid metabolism. This is Probable ATP-citrate synthase (acly) from Dictyostelium discoideum (Social amoeba).